A 399-amino-acid chain; its full sequence is Subtilisin-like protease 4 (399 aa).

Residues 1-19 (MVCLKTLSVFLAAFAAADA) form the signal peptide. The propeptide occupies 20-118 (RAVFKTQGHK…VEQDQVVRIS (99 aa)). Positions 38-117 (YIVVMKDGVS…YVEQDQVVRI (80 aa)) constitute an Inhibitor I9 domain. N102 carries N-linked (GlcNAc...) asparagine glycosylation. Residues 128–399 (SWGLGRVSHR…NRLLYNGSGQ (272 aa)) form the Peptidase S8 domain. Catalysis depends on charge relay system residues D160 and H191. N-linked (GlcNAc...) asparagine glycans are attached at residues N252 and N308. Residue S346 is the Charge relay system of the active site. N-linked (GlcNAc...) asparagine glycosylation is present at N395.

It belongs to the peptidase S8 family.

The protein localises to the secreted. Secreted subtilisin-like serine protease with keratinolytic activity that contributes to pathogenicity. The protein is Subtilisin-like protease 4 (SUB4) of Trichophyton rubrum (Athlete's foot fungus).